Here is a 417-residue protein sequence, read N- to C-terminus: Serine hydroxymethyltransferase 2 (417 aa).

(6S)-5,6,7,8-tetrahydrofolate-binding positions include L121 and 125–127 (GHL). K230 is subject to N6-(pyridoxal phosphate)lysine. Residue 355-357 (SPF) coordinates (6S)-5,6,7,8-tetrahydrofolate.

It belongs to the SHMT family. In terms of assembly, homodimer. Pyridoxal 5'-phosphate serves as cofactor.

The protein resides in the cytoplasm. The enzyme catalyses (6R)-5,10-methylene-5,6,7,8-tetrahydrofolate + glycine + H2O = (6S)-5,6,7,8-tetrahydrofolate + L-serine. The protein operates within one-carbon metabolism; tetrahydrofolate interconversion. It participates in amino-acid biosynthesis; glycine biosynthesis; glycine from L-serine: step 1/1. Its function is as follows. Catalyzes the reversible interconversion of serine and glycine with tetrahydrofolate (THF) serving as the one-carbon carrier. This reaction serves as the major source of one-carbon groups required for the biosynthesis of purines, thymidylate, methionine, and other important biomolecules. Also exhibits THF-independent aldolase activity toward beta-hydroxyamino acids, producing glycine and aldehydes, via a retro-aldol mechanism. This chain is Serine hydroxymethyltransferase 2, found in Pseudomonas fluorescens (strain ATCC BAA-477 / NRRL B-23932 / Pf-5).